A 498-amino-acid polypeptide reads, in one-letter code: ATP synthase subunit beta, chloroplastic (498 aa).

ATP is bound at residue 172–179 (GGAGVGKT).

It belongs to the ATPase alpha/beta chains family. F-type ATPases have 2 components, CF(1) - the catalytic core - and CF(0) - the membrane proton channel. CF(1) has five subunits: alpha(3), beta(3), gamma(1), delta(1), epsilon(1). CF(0) has four main subunits: a(1), b(1), b'(1) and c(9-12).

The protein localises to the plastid. It is found in the chloroplast thylakoid membrane. The catalysed reaction is ATP + H2O + 4 H(+)(in) = ADP + phosphate + 5 H(+)(out). Produces ATP from ADP in the presence of a proton gradient across the membrane. The catalytic sites are hosted primarily by the beta subunits. The protein is ATP synthase subunit beta, chloroplastic of Myristica fragrans (Nutmeg).